A 132-amino-acid chain; its full sequence is uncharacterized protein (132 aa).

The tract at residues 1-34 is disordered; sequence MTAGAGGSPPTRRCPATEDRAPATVATPSSADPT.

The protein to M.tuberculosis Rv2656c.

This is an uncharacterized protein from Mycobacterium tuberculosis (strain CDC 1551 / Oshkosh).